The sequence spans 147 residues: D-aminoacyl-tRNA deacylase (147 aa).

A Gly-cisPro motif, important for rejection of L-amino acids motif is present at residues 136–137; the sequence is GP.

It belongs to the DTD family. Homodimer.

The protein resides in the cytoplasm. It catalyses the reaction glycyl-tRNA(Ala) + H2O = tRNA(Ala) + glycine + H(+). The enzyme catalyses a D-aminoacyl-tRNA + H2O = a tRNA + a D-alpha-amino acid + H(+). In terms of biological role, an aminoacyl-tRNA editing enzyme that deacylates mischarged D-aminoacyl-tRNAs. Also deacylates mischarged glycyl-tRNA(Ala), protecting cells against glycine mischarging by AlaRS. Acts via tRNA-based rather than protein-based catalysis; rejects L-amino acids rather than detecting D-amino acids in the active site. By recycling D-aminoacyl-tRNA to D-amino acids and free tRNA molecules, this enzyme counteracts the toxicity associated with the formation of D-aminoacyl-tRNA entities in vivo and helps enforce protein L-homochirality. The chain is D-aminoacyl-tRNA deacylase from Streptococcus uberis (strain ATCC BAA-854 / 0140J).